Here is a 347-residue protein sequence, read N- to C-terminus: uncharacterized protein (347 aa).

Zn(2+)-binding residues include cysteine 39, histidine 65, cysteine 95, cysteine 98, cysteine 101, cysteine 109, and glutamate 152.

It belongs to the zinc-containing alcohol dehydrogenase family. It depends on Zn(2+) as a cofactor.

This is an uncharacterized protein from Escherichia coli (strain K12).